Consider the following 502-residue polypeptide: Glutamate decarboxylase 1 (502 aa).

S8 carries the phosphoserine modification. The residue at position 277 (K277) is an N6-(pyridoxal phosphate)lysine. The interval 469-502 (LMVTVKKSDIDKQRDIITGWKKFVADRKKTSGIC) is calmodulin-binding.

It belongs to the group II decarboxylase family. In terms of assembly, homohexamer. Interacts with calmodulin with a 1:3 stoichiometry. It depends on pyridoxal 5'-phosphate as a cofactor. Expressed in roots. Detected at low levels in shoots of young seedlings. Not detected in the root tips or in the central vascular bundle in the elongating region of mature roots.

It carries out the reaction L-glutamate + H(+) = 4-aminobutanoate + CO2. With respect to regulation, up-regulated by calmodulin binding at physiological pH. Catalyzes the conversion of glutamate to 4-aminobutanoate (GABA). The calmodulin-binding is calcium-dependent and it is proposed to directly or indirectly form a calcium regulated control of GABA biosynthesis. The polypeptide is Glutamate decarboxylase 1 (GAD1) (Arabidopsis thaliana (Mouse-ear cress)).